Here is a 502-residue protein sequence, read N- to C-terminus: Na(+)/H(+) antiporter NhaB (502 aa).

The next 11 helical transmembrane spans lie at Ala27 to Leu49, Pro66 to Phe86, Val95 to Tyr115, Ile128 to Leu148, Thr149 to Ala169, Phe241 to Ile261, Ile299 to Leu318, Phe350 to Ile370, Met394 to Val414, Ala450 to Ile470, and Met477 to Tyr497.

The protein belongs to the NhaB Na(+)/H(+) (TC 2.A.34) antiporter family.

Its subcellular location is the cell inner membrane. The catalysed reaction is 2 Na(+)(in) + 3 H(+)(out) = 2 Na(+)(out) + 3 H(+)(in). Functionally, na(+)/H(+) antiporter that extrudes sodium in exchange for external protons. This Teredinibacter turnerae (strain ATCC 39867 / T7901) protein is Na(+)/H(+) antiporter NhaB.